A 212-amino-acid polypeptide reads, in one-letter code: Imidazole glycerol phosphate synthase subunit HisH (212 aa).

A Glutamine amidotransferase type-1 domain is found at 2 to 212 (LTAIIDYESG…MIGNFLTWTP (211 aa)). Cysteine 87 acts as the Nucleophile in catalysis. Residues histidine 192 and glutamate 194 contribute to the active site.

Heterodimer of HisH and HisF.

It is found in the cytoplasm. The catalysed reaction is 5-[(5-phospho-1-deoxy-D-ribulos-1-ylimino)methylamino]-1-(5-phospho-beta-D-ribosyl)imidazole-4-carboxamide + L-glutamine = D-erythro-1-(imidazol-4-yl)glycerol 3-phosphate + 5-amino-1-(5-phospho-beta-D-ribosyl)imidazole-4-carboxamide + L-glutamate + H(+). It catalyses the reaction L-glutamine + H2O = L-glutamate + NH4(+). It functions in the pathway amino-acid biosynthesis; L-histidine biosynthesis; L-histidine from 5-phospho-alpha-D-ribose 1-diphosphate: step 5/9. In terms of biological role, IGPS catalyzes the conversion of PRFAR and glutamine to IGP, AICAR and glutamate. The HisH subunit catalyzes the hydrolysis of glutamine to glutamate and ammonia as part of the synthesis of IGP and AICAR. The resulting ammonia molecule is channeled to the active site of HisF. In Ruegeria pomeroyi (strain ATCC 700808 / DSM 15171 / DSS-3) (Silicibacter pomeroyi), this protein is Imidazole glycerol phosphate synthase subunit HisH.